Here is a 352-residue protein sequence, read N- to C-terminus: 3-isopropylmalate dehydrogenase (352 aa).

An NAD(+)-binding site is contributed by 76–89 (GPKWENLPHEHKPE). Residues Arg-96, Arg-106, Arg-134, and Asp-219 each coordinate substrate. Mg(2+) contacts are provided by Asp-219, Asp-243, and Asp-247. 276–288 (GSAPDIAGQNKAN) contacts NAD(+).

The protein belongs to the isocitrate and isopropylmalate dehydrogenases family. LeuB type 1 subfamily. Homodimer. Mg(2+) serves as cofactor. The cofactor is Mn(2+).

It is found in the cytoplasm. The enzyme catalyses (2R,3S)-3-isopropylmalate + NAD(+) = 4-methyl-2-oxopentanoate + CO2 + NADH. It participates in amino-acid biosynthesis; L-leucine biosynthesis; L-leucine from 3-methyl-2-oxobutanoate: step 3/4. Its function is as follows. Catalyzes the oxidation of 3-carboxy-2-hydroxy-4-methylpentanoate (3-isopropylmalate) to 3-carboxy-4-methyl-2-oxopentanoate. The product decarboxylates to 4-methyl-2 oxopentanoate. The polypeptide is 3-isopropylmalate dehydrogenase (Chlorobium chlorochromatii (strain CaD3)).